Consider the following 463-residue polypeptide: Probable Xaa-Pro aminopeptidase PEPP (463 aa).

Mn(2+) is bound by residues aspartate 259, aspartate 270, glutamate 393, and glutamate 433.

This sequence belongs to the peptidase M24B family. The cofactor is Mn(2+).

The catalysed reaction is Release of any N-terminal amino acid, including proline, that is linked to proline, even from a dipeptide or tripeptide.. Its function is as follows. Catalyzes the removal of a penultimate prolyl residue from the N-termini of peptides. The protein is Probable Xaa-Pro aminopeptidase PEPP (PEPP) of Phaeosphaeria nodorum (strain SN15 / ATCC MYA-4574 / FGSC 10173) (Glume blotch fungus).